Here is a 524-residue protein sequence, read N- to C-terminus: Serine/threonine-protein kinase PAK 2 (524 aa).

The interval M1 to E81 is disordered. Residue S2 is modified to N-acetylserine. A phosphoserine mark is found at S2, S20, S55, S58, and S59. T60 is subject to Phosphothreonine. K62 carries the post-translational modification N6-acetyllysine. Position 64 is a phosphoserine (S64). The segment covering K67 to E81 has biased composition (basic and acidic residues). The tract at residues K69–T112 is GTPase-binding. The interval K69–Q137 is autoregulatory region. A CRIB domain is found at I74–G87. Positions F88–K248 are linker. At K128 the chain carries N6-acetyllysine. T134 bears the Phosphothreonine mark. At Y139 the chain carries Phosphotyrosine. The residue at position 141 (S141) is a Phosphoserine. The disordered stretch occupies residues F142–T190. T143 is subject to Phosphothreonine. A Phosphoserine modification is found at S152. Residues T154, T159, and T169 each carry the phosphothreonine modification. The span at P155 to V167 shows a compositional bias: polar residues. Over residues T169–A178 the composition is skewed to acidic residues. Residue S197 is modified to Phosphoserine. Positions A204–T228 are disordered. The Nuclear localization signal signature appears at P245–R251. The Protein kinase domain occupies Y249–L500. ATP contacts are provided by residues I255–V263 and K278. The active-site Proton acceptor is the D368. A Phosphothreonine; by autocatalysis modification is found at T402.

This sequence belongs to the protein kinase superfamily. STE Ser/Thr protein kinase family. STE20 subfamily. Interacts tightly with GTP-bound but not GDP-bound CDC42/p21 and RAC1. Interacts with SH3MD4. Interacts with SCRIB. Interacts with ARHGEF7 and GIT1. PAK-2p34 interacts with ARHGAP10. Interacts with RAC1. In terms of processing, full-length PAK2 is autophosphorylated when activated by CDC42/p21. Following cleavage, both peptides, PAK-2p27 and PAK-2p34, become highly autophosphorylated. Autophosphorylation of PAK-2p27 can occur in the absence of any effectors and is dependent on phosphorylation of Thr-402, because PAK-2p27 is acting as an exogenous substrate. Post-translationally, during apoptosis proteolytically cleaved by caspase-3 or caspase-3-like proteases to yield active PAK-2p34. Ubiquitinated, leading to its proteasomal degradation.

The protein localises to the cytoplasm. Its subcellular location is the nucleus. It localises to the perinuclear region. The protein resides in the membrane. It carries out the reaction L-seryl-[protein] + ATP = O-phospho-L-seryl-[protein] + ADP + H(+). The enzyme catalyses L-threonyl-[protein] + ATP = O-phospho-L-threonyl-[protein] + ADP + H(+). With respect to regulation, activated by binding small G proteins. Binding of GTP-bound CDC42 or RAC1 to the autoregulatory region releases monomers from the autoinhibited dimer, enables phosphorylation of Thr-402 and allows the kinase domain to adopt an active structure. Following caspase cleavage, autophosphorylated PAK-2p34 is constitutively active. Its function is as follows. Serine/threonine protein kinase that plays a role in a variety of different signaling pathways including cytoskeleton regulation, cell motility, cell cycle progression, apoptosis or proliferation. Acts as a downstream effector of the small GTPases CDC42 and RAC1. Activation by the binding of active CDC42 and RAC1 results in a conformational change and a subsequent autophosphorylation on several serine and/or threonine residues. Full-length PAK2 stimulates cell survival and cell growth. Phosphorylates MAPK4 and MAPK6 and activates the downstream target MAPKAPK5, a regulator of F-actin polymerization and cell migration. Phosphorylates JUN and plays an important role in EGF-induced cell proliferation. Phosphorylates many other substrates including histone H4 to promote assembly of H3.3 and H4 into nucleosomes, BAD, ribosomal protein S6, or MBP. Phosphorylates CASP7, thereby preventing its activity. Additionally, associates with ARHGEF7 and GIT1 to perform kinase-independent functions such as spindle orientation control during mitosis. On the other hand, apoptotic stimuli such as DNA damage lead to caspase-mediated cleavage of PAK2, generating PAK-2p34, an active p34 fragment that translocates to the nucleus and promotes cellular apoptosis involving the JNK signaling pathway. Caspase-activated PAK2 phosphorylates MKNK1 and reduces cellular translation. This chain is Serine/threonine-protein kinase PAK 2 (Pak2), found in Rattus norvegicus (Rat).